The chain runs to 291 residues: Probable plasmid-partitioning protein ParB (291 aa).

The protein belongs to the ParB family.

The protein is Probable plasmid-partitioning protein ParB of Deinococcus radiodurans (strain ATCC 13939 / DSM 20539 / JCM 16871 / CCUG 27074 / LMG 4051 / NBRC 15346 / NCIMB 9279 / VKM B-1422 / R1).